A 793-amino-acid polypeptide reads, in one-letter code: Phenylalanine--tRNA ligase beta subunit (793 aa).

The region spanning 39-148 (AGQFTHVIVA…DEAPIGMDLR (110 aa)) is the tRNA-binding domain. Residues 401–477 (PGTVSFLFDT…RLYGYDKLQA (77 aa)) form the B5 domain. Mg(2+) contacts are provided by Asp455, Asp461, Glu464, and Glu465. One can recognise an FDX-ACB domain in the interval 698 to 792 (SKYPQIRRDL…LENEFSILLR (95 aa)).

Belongs to the phenylalanyl-tRNA synthetase beta subunit family. Type 1 subfamily. Tetramer of two alpha and two beta subunits. The cofactor is Mg(2+).

It is found in the cytoplasm. The enzyme catalyses tRNA(Phe) + L-phenylalanine + ATP = L-phenylalanyl-tRNA(Phe) + AMP + diphosphate + H(+). The protein is Phenylalanine--tRNA ligase beta subunit of Legionella pneumophila (strain Paris).